We begin with the raw amino-acid sequence, 396 residues long: Pectinesterase (396 aa).

The N-terminal stretch at 1–21 (MQSKTLYLKATALLGGCTVFA) is a signal peptide. Substrate is bound at residue Thr-174. The Proton donor role is filled by Asp-232. Catalysis depends on Asp-259, which acts as the Nucleophile. Substrate is bound by residues Arg-324 and Trp-326.

The protein belongs to the pectinesterase family.

It is found in the secreted. The enzyme catalyses [(1-&gt;4)-alpha-D-galacturonosyl methyl ester](n) + n H2O = [(1-&gt;4)-alpha-D-galacturonosyl](n) + n methanol + n H(+). The protein operates within glycan metabolism; pectin degradation; 2-dehydro-3-deoxy-D-gluconate from pectin: step 1/5. Its function is as follows. Involved in maceration and soft-rotting of plant tissue. The chain is Pectinesterase (pme) from Ralstonia nicotianae (strain ATCC BAA-1114 / GMI1000) (Ralstonia solanacearum).